The following is a 522-amino-acid chain: Sorting nexin-1 (522 aa).

The segment at 1–142 (MASGGGGCSA…ELEEEEQEDQ (142 aa)) is disordered. Phosphoserine is present on residues Ser32 and Ser39. The segment covering 35 to 45 (EAGDSDTEGED) has biased composition (acidic residues). A phosphothreonine mark is found at Thr41 and Thr48. Residues 55–65 (KPQSPKKTTSL) show a composition bias toward polar residues. Residues Ser58 and Ser72 each carry the phosphoserine modification. Residues 71-80 (GSKENGIHEE) are compositionally biased toward basic and acidic residues. A compositionally biased stretch (polar residues) spans 98-107 (LDSTQNNQKT). Positions 132 to 142 (EELEEEEQEDQ) are enriched in acidic residues. Positions 143 to 272 (FDLTVGITDP…EFLEKEELPR (130 aa)) constitute a PX domain. A 1,2-diacyl-sn-glycero-3-phospho-(1D-myo-inositol-3-phosphate) is bound by residues Arg186, Ser188, and Lys214. Position 188 is a phosphoserine (Ser188). Lys237 carries the post-translational modification N6-acetyllysine. Residue Arg238 participates in a 1,2-diacyl-sn-glycero-3-phospho-(1D-myo-inositol-3-phosphate) binding. Position 280 is a phosphoserine (Ser280). Positions 281–298 (GAGLLKMFNKATDAVSKM) are membrane-binding amphipathic helix. One can recognise a BAR domain in the interval 302–522 (MNESDIWFEE…AFLPEARAIS (221 aa)).

This sequence belongs to the sorting nexin family. In terms of assembly, predominantly forms heterodimers with BAR domain-containing sorting nexins SNX5, SNX6 and SNX32; can self-associate to form homodimers. The heterodimers are proposed to self-assemble into helical arrays on the membrane to stabilize and expand local membrane curvature underlying endosomal tubule formation. Thought to be a component of the originally described retromer complex (also called SNX-BAR retromer) which is a pentamer containing the heterotrimeric retromer cargo-selective complex (CSC), also described as vacuolar protein sorting subcomplex (VPS) and a heterodimeric membrane-deforming subcomplex formed between SNX1 or SNX2 and SNX5 or SNX6 (also called SNX-BAR subcomplex); the respective CSC and SNX-BAR subcomplexes associate with low affinity. Interacts with SNX5, SNX6, SNX32, VPS26A, VPS29, VPS35, DRD5, DENND5A, KALRN, RHOG (GDP-bound form). The interaction with SNX2 is reported controversially. Interacts with DNAJC13; prevented by presence of HGS. Interacts with HGS.

It is found in the endosome membrane. It localises to the golgi apparatus. The protein localises to the trans-Golgi network membrane. Its subcellular location is the early endosome membrane. The protein resides in the cell projection. It is found in the lamellipodium. Its function is as follows. Involved in several stages of intracellular trafficking. Interacts with membranes containing phosphatidylinositol 3-phosphate (PtdIns(3P)) or phosphatidylinositol 3,5-bisphosphate (PtdIns(3,5)P2). Acts in part as component of the retromer membrane-deforming SNX-BAR subcomplex. The SNX-BAR retromer mediates retrograde transport of cargo proteins from endosomes to the trans-Golgi network (TGN) and is involved in endosome-to-plasma membrane transport for cargo protein recycling. The SNX-BAR subcomplex functions to deform the donor membrane into a tubular profile called endosome-to-TGN transport carrier (ETC). Can sense membrane curvature and has in vitro vesicle-to-membrane remodeling activity. Involved in retrograde endosome-to-TGN transport of lysosomal enzyme receptors (IGF2R, M6PR and SORT1). Plays a role in targeting ligand-activated EGFR to the lysosomes for degradation after endocytosis from the cell surface and release from the Golgi. Involvement in retromer-independent endocytic trafficking of P2RY1 and lysosomal degradation of protease-activated receptor-1/F2R. Promotes KALRN- and RHOG-dependent but retromer-independent membrane remodeling such as lamellipodium formation; the function is dependent on GEF activity of KALRN. Required for endocytosis of DRD5 upon agonist stimulation but not for basal receptor trafficking. This Rattus norvegicus (Rat) protein is Sorting nexin-1 (Snx1).